The following is a 233-amino-acid chain: Small ribosomal subunit protein uS2 (233 aa).

This sequence belongs to the universal ribosomal protein uS2 family.

The sequence is that of Small ribosomal subunit protein uS2 from Clostridium beijerinckii (strain ATCC 51743 / NCIMB 8052) (Clostridium acetobutylicum).